Consider the following 65-residue polypeptide: Trypsin inhibitor 1 (65 aa).

Intrachain disulfides connect C39/C56, C46/C58, and C52/C64.

This sequence belongs to the protease inhibitor I7 (squash-type serine protease inhibitor) family.

It localises to the secreted. In terms of biological role, inhibits trypsin. The polypeptide is Trypsin inhibitor 1 (Trichosanthes kirilowii (Chinese snake gourd)).